Here is a 105-residue protein sequence, read N- to C-terminus: Immunoglobulin lambda-like polypeptide 1 (105 aa).

The segment at 1-105 (QPKSDPLVTL…EKSVSPAECS (105 aa)) is c region. The region spanning 6 to 100 (PLVTLFLPSL…EGNTVEKSVS (95 aa)) is the Ig-like C1-type domain. Cysteine 27 and cysteine 86 are disulfide-bonded.

In terms of assembly, associates non-covalently with VPREB1A. Interacts with SYNV1/HRD1 (via N-terminus); this interaction leads to increased IGLL1 ubiquitination and degradation in pre-B cells, possibly through a lysosomal, not proteasomal, pathway.

Its subcellular location is the endoplasmic reticulum. It is found in the secreted. Functionally, critical for B-cell development. The chain is Immunoglobulin lambda-like polypeptide 1 (Igll1) from Mus spretus (Western Mediterranean mouse).